The following is a 208-amino-acid chain: ATP phosphoribosyltransferase (208 aa).

This sequence belongs to the ATP phosphoribosyltransferase family. Short subfamily. As to quaternary structure, heteromultimer composed of HisG and HisZ subunits.

It is found in the cytoplasm. It carries out the reaction 1-(5-phospho-beta-D-ribosyl)-ATP + diphosphate = 5-phospho-alpha-D-ribose 1-diphosphate + ATP. It functions in the pathway amino-acid biosynthesis; L-histidine biosynthesis; L-histidine from 5-phospho-alpha-D-ribose 1-diphosphate: step 1/9. Catalyzes the condensation of ATP and 5-phosphoribose 1-diphosphate to form N'-(5'-phosphoribosyl)-ATP (PR-ATP). Has a crucial role in the pathway because the rate of histidine biosynthesis seems to be controlled primarily by regulation of HisG enzymatic activity. This chain is ATP phosphoribosyltransferase, found in Thermotoga petrophila (strain ATCC BAA-488 / DSM 13995 / JCM 10881 / RKU-1).